A 499-amino-acid polypeptide reads, in one-letter code: Probable aspartyl protease At4g16563 (499 aa).

The first 26 residues, 1 to 26 (MKTCLIFFLYTTILQYYFHFSVSSLS), serve as a signal peptide directing secretion. The Peptidase A1 domain maps to 83–487 (YLISLSVGSS…DLLNRRVGFA (405 aa)). The active site involves Asp101. A disulfide bridge links Cys111 with Cys119. Asn175 and Asn211 each carry an N-linked (GlcNAc...) asparagine glycan. Residue Asp353 is part of the active site. A disulfide bridge connects residues Cys396 and Cys445. N-linked (GlcNAc...) asparagine glycosylation is found at Asn400 and Asn415.

This sequence belongs to the peptidase A1 family.

In Arabidopsis thaliana (Mouse-ear cress), this protein is Probable aspartyl protease At4g16563.